We begin with the raw amino-acid sequence, 646 residues long: uncharacterized protein (646 aa).

Helical transmembrane passes span 20 to 40 (AYFL…SFIF), 54 to 74 (LVKT…IFFI), 115 to 135 (LAAI…FFMI), 154 to 174 (AFVM…ILSL), 203 to 223 (TVLS…ANAI), 232 to 252 (ILIL…VAFF), 285 to 305 (LFLT…IYMF), 523 to 543 (GVAL…IVQG), 582 to 602 (IGFL…FAYA), and 613 to 633 (FLEA…YYIV).

Belongs to the ABC-4 integral membrane protein family.

The protein localises to the cell membrane. This is an uncharacterized protein from Bacillus subtilis (strain 168).